We begin with the raw amino-acid sequence, 841 residues long: Protein translocase subunit SecA (841 aa).

ATP-binding positions include Gln85, 103–107 (GEGKT), and Asp492. Residues 788–841 (EVVQGQTTAHQPQEGDEEKTVKKKPVRKVVDIGRNSPCHCGSGKKYKNCHGKTE) form a disordered region. 4 residues coordinate Zn(2+): Cys825, Cys827, Cys836, and His837. A compositionally biased stretch (basic residues) spans 829–841 (SGKKYKNCHGKTE).

It belongs to the SecA family. As to quaternary structure, monomer and homodimer. Part of the essential Sec protein translocation apparatus which comprises SecA, SecYEG and auxiliary proteins SecDF. Other proteins may also be involved. The cofactor is Zn(2+).

It is found in the cell membrane. It localises to the cytoplasm. It catalyses the reaction ATP + H2O + cellular proteinSide 1 = ADP + phosphate + cellular proteinSide 2.. Part of the Sec protein translocase complex. Interacts with the SecYEG preprotein conducting channel. Has a central role in coupling the hydrolysis of ATP to the transfer of proteins into and across the cell membrane, serving as an ATP-driven molecular motor driving the stepwise translocation of polypeptide chains across the membrane. This is Protein translocase subunit SecA from Bacillus pumilus (strain SAFR-032).